Here is a 355-residue protein sequence, read N- to C-terminus: Uroporphyrinogen decarboxylase (355 aa).

Substrate is bound by residues 27-31, aspartate 77, tyrosine 154, threonine 209, and histidine 327; that span reads RQAGR.

Belongs to the uroporphyrinogen decarboxylase family. In terms of assembly, homodimer.

The protein resides in the cytoplasm. The catalysed reaction is uroporphyrinogen III + 4 H(+) = coproporphyrinogen III + 4 CO2. It participates in porphyrin-containing compound metabolism; protoporphyrin-IX biosynthesis; coproporphyrinogen-III from 5-aminolevulinate: step 4/4. Catalyzes the decarboxylation of four acetate groups of uroporphyrinogen-III to yield coproporphyrinogen-III. This Pseudoalteromonas atlantica (strain T6c / ATCC BAA-1087) protein is Uroporphyrinogen decarboxylase.